A 534-amino-acid polypeptide reads, in one-letter code: MELSPRSPPEMLESDCPSPLELKSAPSKKMWIKLRSLLRYMVKQLENGEVNIEELKKNLEYTASLLEAVYIDETRQILDTEDELQELRSDAVPSEVRDWLASTFTQQTRAKGPSEEKPKFRSIVHAVQAGIFVERMFRRTYTSVGPTYSTAVLNCLKNVDLWCFDVFSLNRAADDHALRTIVFELLTRHNLISRFKIPTVFLMTFLDALETGYGKYKNPYHNQIHAADVTQTVHCFLLRTGMVHCLSEIEVLAIIFAAAIHDYEHTGTTNSFHIQTKSECAILYNDRSVLENHHISSVFRMMQDDEMNIFINLTKDEFVELRALVIEMVLATDMSCHFQQVKSMKTALQQLERIDKSKALSLLLHAADISHPTKQWSVHSRWTKALMEEFFRQGDKEAELGLPFSPLCDRTSTLVAQSQIGFIDFIVEPTFSVLTDVAEKSVQPTGDDDSKSKNQPSFQWRQPSLDVEVGDPNPDVVSFRSTWTKYIQENKQKWKERAASGITNQMSIDELSPCEEEAPASPAEDEHNQNGNLD.

A disordered region spans residues 1–21; the sequence is MELSPRSPPEMLESDCPSPLE. A phosphoserine mark is found at Ser-7 and Ser-14. Calmodulin-binding stretches follow at residues 27–47 and 116–139; these read SKKM…QLEN and EKPK…MFRR. One can recognise a PDEase domain in the interval 144–501; it reads VGPTYSTAVL…QKWKERAASG (358 aa). His-221 (proton donor) is an active-site residue. Zn(2+)-binding residues include His-225, His-261, Asp-262, and Asp-368. Mg(2+) is bound at residue Asp-262. Disordered regions lie at residues 442–473 and 494–534; these read VQPT…GDPN and WKER…GNLD. A compositionally biased stretch (polar residues) spans 453–462; sequence KNQPSFQWRQ. Phosphoserine is present on residues Ser-464 and Ser-512.

Belongs to the cyclic nucleotide phosphodiesterase family. PDE1 subfamily. As to quaternary structure, homodimer. Requires Zn(2+) as cofactor. Mg(2+) serves as cofactor. In terms of tissue distribution, expressed in central nervous system regions. Most abundant in basal ganglia. Also found in kidney papilla and adrenal medulla.

The protein resides in the cytoplasm. It localises to the cytosol. It carries out the reaction a nucleoside 3',5'-cyclic phosphate + H2O = a nucleoside 5'-phosphate + H(+). It catalyses the reaction 3',5'-cyclic GMP + H2O = GMP + H(+). The catalysed reaction is 3',5'-cyclic AMP + H2O = AMP + H(+). Type I PDE are activated by the binding of calmodulin in the presence of Ca(2+). In terms of biological role, cyclic nucleotide phosphodiesterase with a dual specificity for the second messengers cAMP and cGMP, which are key regulators of many important physiological processes. Has a preference for cGMP as a substrate. The polypeptide is Dual specificity calcium/calmodulin-dependent 3',5'-cyclic nucleotide phosphodiesterase 1B (Bos taurus (Bovine)).